A 258-amino-acid chain; its full sequence is Snake venom serine protease HS114 (258 aa).

The N-terminal stretch at 1–18 (MVLVRVVANLLILQLSYA) is a signal peptide. Residues 19–24 (QKVSEL) constitute a propeptide that is removed on maturation. Positions 25-249 (VVGGDECNIN…YNTWIESVIA (225 aa)) constitute a Peptidase S1 domain. Disulfide bonds link C31-C163, C50-C66, C98-C256, C142-C210, C174-C189, and C200-C225. A glycan (N-linked (GlcNAc...) asparagine) is linked at N44. Active-site charge relay system residues include H65 and D110. S204 (charge relay system) is an active-site residue.

It belongs to the peptidase S1 family. Snake venom subfamily. Monomer. Post-translationally, N-glycosylated. Contains approximately 10% carbohydrates. As to expression, expressed by the venom gland.

The protein resides in the secreted. Inhibited by benzamidine, PMSF, leupeptin, SDS and DTT, but not by EDTA, and commercial antivenom. Snake venom serine protease that shows non-specific action on fibrinogen. It preferentially degrades fibrinogen Aalpha (FGA), releasing fibrinopeptide A, and shows a lower activity on fibrinogen Bbeta (FGB), releasing fibrinopeptide B and other uncommon fibrinopeptides. Also shows low fibrinolytic activity compared to plasmin. Has high enzymatic activity on the substrates for activated protein C and factor XIa, and for thrombin. Shows a wide activity spectrum at different peptide sequences, with a preferential cleavage at Lys-|-Xaa over Arg-|-Xaa bonds. In Bothrops jararaca (Jararaca), this protein is Snake venom serine protease HS114.